Consider the following 429-residue polypeptide: 3-oxo-tetronate kinase (429 aa).

ATP is bound by residues Ser268, 366–369 (GGET), and Gly410.

It belongs to the four-carbon acid sugar kinase family.

The catalysed reaction is 3-dehydro-L-erythronate + ATP = 3-dehydro-4-O-phospho-L-erythronate + ADP + H(+). It catalyses the reaction 3-dehydro-D-erythronate + ATP = 3-dehydro-4-O-phospho-D-erythronate + ADP + H(+). Catalyzes the ATP-dependent phosphorylation of 3-oxo-tetronate to 3-oxo-tetronate 4-phosphate. This chain is 3-oxo-tetronate kinase, found in Pseudomonas savastanoi pv. phaseolicola (strain 1448A / Race 6) (Pseudomonas syringae pv. phaseolicola (strain 1448A / Race 6)).